Reading from the N-terminus, the 600-residue chain is Mitoguardin 1 (600 aa).

The next 2 membrane-spanning stretches (helical) occupy residues 15–32 and 38–58; these read TYAVRVFALPVSWYYSLS and PVAKKLFMVTAVSAVSVIFLA. 2 positions are modified to phosphoserine: Ser257 and Ser261.

Belongs to the mitoguardin family. As to quaternary structure, homodimer and heterodimer; forms heterodimers with MIGA2. Interacts with PLD6/MitoPLD.

The protein resides in the mitochondrion outer membrane. Its function is as follows. Regulator of mitochondrial fusion. Acts by forming homo- and heterodimers at the mitochondrial outer membrane and facilitating the formation of PLD6/MitoPLD dimers. May act by regulating phospholipid metabolism via PLD6/MitoPLD. In Mus musculus (Mouse), this protein is Mitoguardin 1.